Reading from the N-terminus, the 418-residue chain is Alpha-tubulin N-acetyltransferase 1 (418 aa).

The N-acetyltransferase domain maps to M1–F186. Acetyl-CoA is bound by residues F120 to K133 and S156 to K165. Disordered stretches follow at residues S237–S292 and Q322–D353. Basic and acidic residues predominate over residues Q277–S287. The segment covering R329–D353 has biased composition (polar residues).

Belongs to the acetyltransferase ATAT1 family.

The protein resides in the cytoplasm. It is found in the membrane. Its subcellular location is the clathrin-coated pit. The protein localises to the cell junction. It localises to the focal adhesion. The protein resides in the cell projection. It is found in the axon. Its subcellular location is the cytoskeleton. The protein localises to the spindle. The catalysed reaction is L-lysyl-[alpha-tubulin] + acetyl-CoA = N(6)-acetyl-L-lysyl-[alpha-tubulin] + CoA + H(+). In terms of biological role, specifically acetylates 'Lys-40' in alpha-tubulin on the lumenal side of microtubules. Promotes microtubule destabilization and accelerates microtubule dynamics; this activity may be independent of acetylation activity. Acetylates alpha-tubulin with a slow enzymatic rate, due to a catalytic site that is not optimized for acetyl transfer. Enters the microtubule through each end and diffuses quickly throughout the lumen of microtubules. Acetylates only long/old microtubules because of its slow acetylation rate since it does not have time to act on dynamically unstable microtubules before the enzyme is released. May be involved in neuron development. This Xenopus laevis (African clawed frog) protein is Alpha-tubulin N-acetyltransferase 1.